Here is a 32-residue protein sequence, read N- to C-terminus: U21-ctenitoxin-Co1a (32 aa).

Disulfide bonds link Cys-3–Cys-17, Cys-10–Cys-21, and Cys-16–Cys-30.

As to expression, expressed by the venom gland.

It localises to the secreted. In terms of biological role, not toxic to mice by intracerebroventricular injection. The polypeptide is U21-ctenitoxin-Co1a (Ctenus ornatus (Brazilian spider)).